Reading from the N-terminus, the 366-residue chain is Peroxisomal (S)-2-hydroxy-acid oxidase GLO4 (366 aa).

The 360-residue stretch at 1–360 (MEDNLPVNVR…TRSHVMTEGD (360 aa)) folds into the FMN hydroxy acid dehydrogenase domain. Residue tyrosine 27 coordinates a 2-oxocarboxylate. Residues 80 to 82 (PTG), serine 109, 130 to 132 (QLY), and threonine 158 each bind FMN. Residue tyrosine 132 coordinates a 2-oxocarboxylate. Position 167 (arginine 167) interacts with a 2-oxocarboxylate. 2 residues coordinate FMN: lysine 231 and serine 253. The active-site Proton acceptor is histidine 255. Arginine 258 lines the a 2-oxocarboxylate pocket. Residues 286–290 (DGGIR) and 309–310 (XX) each bind FMN. The short motif at 364–366 (SLL) is the Microbody targeting signal element.

The protein belongs to the FMN-dependent alpha-hydroxy acid dehydrogenase family. Homotetramer. FMN serves as cofactor.

The protein localises to the peroxisome. The catalysed reaction is a (2S)-2-hydroxycarboxylate + O2 = a 2-oxocarboxylate + H2O2. The protein operates within lipid metabolism; fatty acid metabolism. Oxidase that catalyzes the oxidation of a broad range of 2-hydroxyacids to the corresponding 2-oxoacids, with a reduction of O2 to H2O2. May be involved in a general medium- and long-chain fatty acid catabolic pathway such as alpha-oxidation. This is Peroxisomal (S)-2-hydroxy-acid oxidase GLO4 (GLO4) from Oryza sativa subsp. indica (Rice).